Consider the following 564-residue polypeptide: Dihydropyrimidinase-related protein 5 (564 aa).

A phosphothreonine mark is found at Thr509 and Thr514. Phosphoserine occurs at positions 532 and 538. Arg559 carries the omega-N-methylarginine modification.

Belongs to the metallo-dependent hydrolases superfamily. Hydantoinase/dihydropyrimidinase family. As to quaternary structure, homotetramer, and heterotetramer with other DPYS-like proteins. Interacts with DPYSL2, DPYSL3 and DPYSL4. Interacts with MAP2 and TUBB3. As to expression, highly expressed in embryonic and early postnatal brain and spinal cord.

It localises to the cytoplasm. Involved in the negative regulation of dendrite outgrowth. The sequence is that of Dihydropyrimidinase-related protein 5 (Dpysl5) from Rattus norvegicus (Rat).